Here is a 537-residue protein sequence, read N- to C-terminus: Zinc finger protein 835 (537 aa).

The disordered stretch occupies residues 12–109; it reads AELEGNWKHE…RERGGGPKKP (98 aa). Residues 63-77 show a composition bias toward polar residues; sequence TISSPAATQASVPDD. Positions 89-104 are enriched in basic and acidic residues; it reads SPKERHPDSRQRERGG. 14 consecutive C2H2-type zinc fingers follow at residues 110-132, 138-160, 166-188, 194-216, 222-244, 250-272, 278-300, 306-328, 334-356, 362-384, 390-412, 418-440, 446-468, and 474-496; these read WKCG…QRIH, FACP…QRTH, YACH…WRTH, HRCA…RRVH, YACA…QRIH, YECS…QRIH, YRCG…RRVH, YTCQ…RRIH, YACG…QRTH, YPCH…RLVH, YRCL…QKIH, YKCG…QRTH, YTCP…HIVH, and YECS…QRTH. The segment at 497–537 is disordered; that stretch reads ADSSGRLCPAPTPDSTPGLSQGGETCQQGCPGRNPRGPAED. Residues 509–524 are compositionally biased toward polar residues; it reads PDSTPGLSQGGETCQQ.

It belongs to the krueppel C2H2-type zinc-finger protein family.

The protein localises to the nucleus. Its function is as follows. May be involved in transcriptional regulation. The polypeptide is Zinc finger protein 835 (ZNF835) (Homo sapiens (Human)).